A 200-amino-acid polypeptide reads, in one-letter code: ATP-dependent Clp protease proteolytic subunit 2 (200 aa).

Residue Ser-101 is the Nucleophile of the active site. The active site involves His-126.

Belongs to the peptidase S14 family. As to quaternary structure, fourteen ClpP subunits assemble into 2 heptameric rings which stack back to back to give a disk-like structure with a central cavity, resembling the structure of eukaryotic proteasomes.

Its subcellular location is the cytoplasm. It catalyses the reaction Hydrolysis of proteins to small peptides in the presence of ATP and magnesium. alpha-casein is the usual test substrate. In the absence of ATP, only oligopeptides shorter than five residues are hydrolyzed (such as succinyl-Leu-Tyr-|-NHMec, and Leu-Tyr-Leu-|-Tyr-Trp, in which cleavage of the -Tyr-|-Leu- and -Tyr-|-Trp bonds also occurs).. In terms of biological role, cleaves peptides in various proteins in a process that requires ATP hydrolysis. Has a chymotrypsin-like activity. Plays a major role in the degradation of misfolded proteins. The sequence is that of ATP-dependent Clp protease proteolytic subunit 2 from Prochlorococcus marinus (strain NATL2A).